A 99-amino-acid polypeptide reads, in one-letter code: Aspartyl/glutamyl-tRNA(Asn/Gln) amidotransferase subunit C (99 aa).

The protein belongs to the GatC family. Heterotrimer of A, B and C subunits.

The enzyme catalyses L-glutamyl-tRNA(Gln) + L-glutamine + ATP + H2O = L-glutaminyl-tRNA(Gln) + L-glutamate + ADP + phosphate + H(+). It catalyses the reaction L-aspartyl-tRNA(Asn) + L-glutamine + ATP + H2O = L-asparaginyl-tRNA(Asn) + L-glutamate + ADP + phosphate + 2 H(+). Its function is as follows. Allows the formation of correctly charged Asn-tRNA(Asn) or Gln-tRNA(Gln) through the transamidation of misacylated Asp-tRNA(Asn) or Glu-tRNA(Gln) in organisms which lack either or both of asparaginyl-tRNA or glutaminyl-tRNA synthetases. The reaction takes place in the presence of glutamine and ATP through an activated phospho-Asp-tRNA(Asn) or phospho-Glu-tRNA(Gln). The protein is Aspartyl/glutamyl-tRNA(Asn/Gln) amidotransferase subunit C of Solibacter usitatus (strain Ellin6076).